The sequence spans 122 residues: MEPLGNRRPCSVCITKNRNCPRFCEYAEYFPYELQSQYESANELFGTPNIITMMQHAPEEKKQMLATSIIMEGNAWTEDPISGGFGMIQKLMWKIMLHKAYLRELQEKIKEEKEKKPASSLY.

The LOB domain maps to 8-109 (RPCSVCITKN…AYLRELQEKI (102 aa)).

It belongs to the LOB domain-containing protein family.

This chain is LOB domain-containing protein 5 (LBD5), found in Arabidopsis thaliana (Mouse-ear cress).